The following is a 207-amino-acid chain: Interleukin-6 (207 aa).

The signal sequence occupies residues 1–20 (MNSLSTSAFSLGLLLVMATA). Cys-67 and Cys-73 form a disulfide bridge. A Phosphoserine modification is found at Ser-76. Cys-96 and Cys-106 form a disulfide bridge.

Belongs to the IL-6 superfamily. As to quaternary structure, component of a hexamer of two molecules each of IL6, IL6R and IL6ST; first binds to IL6R to associate with the signaling subunit IL6ST. Interacts with IL6R (via the N-terminal ectodomain); this interaction may be affected by IL6R-binding with SORL1, hence decreasing IL6 cis signaling. Interacts with SORL1 (via the N-terminal ectodomain); this interaction leads to IL6 internalization and lysosomal degradation. May form a trimeric complex with the soluble SORL1 ectodomain and soluble IL6R receptor; this interaction might stabilize circulating IL6, hence promoting IL6 trans signaling.

It is found in the secreted. Functionally, cytokine with a wide variety of biological functions in immunity, tissue regeneration, and metabolism. Binds to IL6R, then the complex associates to the signaling subunit IL6ST/gp130 to trigger the intracellular IL6-signaling pathway. The interaction with the membrane-bound IL6R and IL6ST stimulates 'classic signaling', whereas the binding of IL6 and soluble IL6R to IL6ST stimulates 'trans-signaling'. Alternatively, 'cluster signaling' occurs when membrane-bound IL6:IL6R complexes on transmitter cells activate IL6ST receptors on neighboring receiver cells. In terms of biological role, IL6 is a potent inducer of the acute phase response. Rapid production of IL6 contributes to host defense during infection and tissue injury, but excessive IL6 synthesis is involved in disease pathology. In the innate immune response, is synthesized by myeloid cells, such as macrophages and dendritic cells, upon recognition of pathogens through toll-like receptors (TLRs) at the site of infection or tissue injury. In the adaptive immune response, is required for the differentiation of B cells into immunoglobulin-secreting cells. Plays a major role in the differentiation of CD4(+) T cell subsets. Essential factor for the development of T follicular helper (Tfh) cells that are required for the induction of germinal-center formation. Required to drive naive CD4(+) T cells to the Th17 lineage. Also required for proliferation of myeloma cells and the survival of plasmablast cells. Its function is as follows. Acts as an essential factor in bone homeostasis and on vessels directly or indirectly by induction of VEGF, resulting in increased angiogenesis activity and vascular permeability. Induces, through 'trans-signaling' and synergistically with IL1B and TNF, the production of VEGF. Involved in metabolic controls, is discharged into the bloodstream after muscle contraction increasing lipolysis and improving insulin resistance. 'Trans-signaling' in central nervous system also regulates energy and glucose homeostasis. Mediates, through GLP-1, crosstalk between insulin-sensitive tissues, intestinal L cells and pancreatic islets to adapt to changes in insulin demand. Also acts as a myokine. Plays a protective role during liver injury, being required for maintenance of tissue regeneration. Also has a pivotal role in iron metabolism by regulating HAMP/hepcidin expression upon inflammation or bacterial infection. Through activation of IL6ST-YAP-NOTCH pathway, induces inflammation-induced epithelial regeneration. The polypeptide is Interleukin-6 (IL6) (Vulpes vulpes (Red fox)).